The sequence spans 316 residues: Pantothenate kinase (316 aa).

95–102 (GSVAVGKS) contributes to the ATP binding site.

The protein belongs to the prokaryotic pantothenate kinase family.

The protein localises to the cytoplasm. The catalysed reaction is (R)-pantothenate + ATP = (R)-4'-phosphopantothenate + ADP + H(+). It participates in cofactor biosynthesis; coenzyme A biosynthesis; CoA from (R)-pantothenate: step 1/5. In Shewanella sp. (strain MR-4), this protein is Pantothenate kinase.